Consider the following 71-residue polypeptide: UPF0352 protein Asuc_0778 (71 aa).

This sequence belongs to the UPF0352 family.

In Actinobacillus succinogenes (strain ATCC 55618 / DSM 22257 / CCUG 43843 / 130Z), this protein is UPF0352 protein Asuc_0778.